The sequence spans 226 residues: Cytidylate kinase (226 aa).

ATP is bound at residue 10 to 18 (GPASSGKST).

This sequence belongs to the cytidylate kinase family. Type 1 subfamily.

It localises to the cytoplasm. It catalyses the reaction CMP + ATP = CDP + ADP. The catalysed reaction is dCMP + ATP = dCDP + ADP. This Streptococcus equi subsp. zooepidemicus (strain MGCS10565) protein is Cytidylate kinase.